We begin with the raw amino-acid sequence, 50 residues long: MDNEIIIIVIVIIIFFFYLKQKKLTNCETQVVKVQKDIDEINLKLKKLNK.

A helical transmembrane segment spans residues 5-19 (IIIIVIVIIIFFFYL). Residues 19–50 (LKQKKLTNCETQVVKVQKDIDEINLKLKKLNK) are a coiled coil.

It localises to the membrane. This is an uncharacterized protein from Acheta domesticus (House cricket).